A 38-amino-acid chain; its full sequence is Photosystem II reaction center protein L (38 aa).

A helical transmembrane segment spans residues 17 to 37 (SLYWGLLLIFVLAVSFSNYFF).

It belongs to the PsbL family. In terms of assembly, PSII is composed of 1 copy each of membrane proteins PsbA, PsbB, PsbC, PsbD, PsbE, PsbF, PsbH, PsbI, PsbJ, PsbK, PsbL, PsbM, PsbT, PsbX, PsbY, PsbZ, Psb30/Ycf12, at least 3 peripheral proteins of the oxygen-evolving complex and a large number of cofactors. It forms dimeric complexes.

Its subcellular location is the plastid. It is found in the chloroplast thylakoid membrane. Functionally, one of the components of the core complex of photosystem II (PSII). PSII is a light-driven water:plastoquinone oxidoreductase that uses light energy to abstract electrons from H(2)O, generating O(2) and a proton gradient subsequently used for ATP formation. It consists of a core antenna complex that captures photons, and an electron transfer chain that converts photonic excitation into a charge separation. This subunit is found at the monomer-monomer interface and is required for correct PSII assembly and/or dimerization. In Amborella trichopoda, this protein is Photosystem II reaction center protein L.